Here is a 308-residue protein sequence, read N- to C-terminus: Protein translocase subunit SecF (308 aa).

Transmembrane regions (helical) follow at residues 23-42 (VSYS…IGIY), 140-160 (IEAG…YIGV), 164-184 (WYFG…ALGF), 194-214 (LSTI…SVVI), 246-266 (ILTV…GGKA), and 272-292 (VLVF…SAPI).

The protein belongs to the SecD/SecF family. SecF subfamily. Forms a complex with SecD. Part of the essential Sec protein translocation apparatus which comprises SecA, SecYEG and auxiliary proteins SecDF-YajC and YidC.

The protein localises to the cell inner membrane. In terms of biological role, part of the Sec protein translocase complex. Interacts with the SecYEG preprotein conducting channel. SecDF uses the proton motive force (PMF) to complete protein translocation after the ATP-dependent function of SecA. This chain is Protein translocase subunit SecF, found in Rickettsia typhi (strain ATCC VR-144 / Wilmington).